A 244-amino-acid chain; its full sequence is Protein TIFY 10b (244 aa).

In terms of domain architecture, Tify spans 97–132 (QEPEKRQLTIFYGGKVLVFNDFPADKAKGLMQLASK). The disordered stretch occupies residues 174–244 (QKPARANASD…AVVKPIERGQ (71 aa)). The Jas motif lies at 185–210 (PIARKASLHRFLEKRKDRLNAKTPYQ). The Nuclear localization signal motif lies at 187-194 (ARKASLHR). Over residues 194-204 (RFLEKRKDRLN) the composition is skewed to basic and acidic residues.

It belongs to the TIFY/JAZ family. Interacts with BHLH148. Interacts with COI1A and COI1B in a coronatine-dependent manner. Coronatine is an analog of jasmonoyl isoleucine (JA-Ile). Post-translationally, ubiquitinated. Targeted for degradation by the SCF(COI1) E3 ubiquitin ligase-proteasome pathway during jasmonate signaling.

Its subcellular location is the nucleus. In terms of biological role, repressor of jasmonate responses. The polypeptide is Protein TIFY 10b (Oryza sativa subsp. japonica (Rice)).